A 382-amino-acid chain; its full sequence is Putative acetyl-CoA C-acetyltransferase VraB (382 aa).

C86 acts as the Acyl-thioester intermediate in catalysis. H338 (proton acceptor) is an active-site residue.

The protein belongs to the thiolase-like superfamily. Thiolase family.

The chain is Putative acetyl-CoA C-acetyltransferase VraB (vraB) from Staphylococcus epidermidis (strain ATCC 35984 / DSM 28319 / BCRC 17069 / CCUG 31568 / BM 3577 / RP62A).